Consider the following 341-residue polypeptide: tRNA N6-adenosine threonylcarbamoyltransferase (341 aa).

Fe cation contacts are provided by His113 and His117. Substrate is bound by residues 136-140 (IISGG), Asp169, Gly182, and Asn280. Asp308 lines the Fe cation pocket.

This sequence belongs to the KAE1 / TsaD family. Fe(2+) is required as a cofactor.

The protein localises to the cytoplasm. It catalyses the reaction L-threonylcarbamoyladenylate + adenosine(37) in tRNA = N(6)-L-threonylcarbamoyladenosine(37) in tRNA + AMP + H(+). Functionally, required for the formation of a threonylcarbamoyl group on adenosine at position 37 (t(6)A37) in tRNAs that read codons beginning with adenine. Is involved in the transfer of the threonylcarbamoyl moiety of threonylcarbamoyl-AMP (TC-AMP) to the N6 group of A37, together with TsaE and TsaB. TsaD likely plays a direct catalytic role in this reaction. The sequence is that of tRNA N6-adenosine threonylcarbamoyltransferase from Anaplasma marginale (strain St. Maries).